The primary structure comprises 60 residues: Large ribosomal subunit protein bL32 (60 aa).

Disordered regions lie at residues 1-28 and 41-60; these read MAVQ…PGIA and HISP…KSEA. Over residues 9–19 the composition is skewed to basic residues; the sequence is SPSKRGMHRSH.

The protein belongs to the bacterial ribosomal protein bL32 family.

The protein is Large ribosomal subunit protein bL32 of Verminephrobacter eiseniae (strain EF01-2).